Reading from the N-terminus, the 301-residue chain is Fluoroquinolones export ATP-binding protein MT2762 (301 aa).

Residues 18–246 (IRVRGLTFRY…RSRRRVRVEY (229 aa)) form the ABC transporter domain. Position 52 to 59 (52 to 59 (GPSGAGKS)) interacts with ATP.

The protein belongs to the ABC transporter superfamily. In terms of assembly, the complex is composed of 2 ATP-binding proteins and 2 transmembrane proteins.

The protein localises to the cell membrane. In terms of biological role, part of the ABC transporter complex involved in fluoroquinolones export. Probably responsible for energy coupling to the transport system. The sequence is that of Fluoroquinolones export ATP-binding protein MT2762 from Mycobacterium tuberculosis (strain CDC 1551 / Oshkosh).